A 207-amino-acid polypeptide reads, in one-letter code: Dephospho-CoA kinase (207 aa).

Residues 5–207 enclose the DPCK domain; that stretch reads IVGLTGGIAS…AALQTHRIEN (203 aa). 13–18 provides a ligand contact to ATP; the sequence is ASGKSA.

The protein belongs to the CoaE family.

Its subcellular location is the cytoplasm. The enzyme catalyses 3'-dephospho-CoA + ATP = ADP + CoA + H(+). It participates in cofactor biosynthesis; coenzyme A biosynthesis; CoA from (R)-pantothenate: step 5/5. In terms of biological role, catalyzes the phosphorylation of the 3'-hydroxyl group of dephosphocoenzyme A to form coenzyme A. The polypeptide is Dephospho-CoA kinase (Xanthomonas campestris pv. campestris (strain ATCC 33913 / DSM 3586 / NCPPB 528 / LMG 568 / P 25)).